The following is a 147-amino-acid chain: uncharacterized protein (147 aa).

This is an uncharacterized protein from Homo sapiens (Human).